A 476-amino-acid chain; its full sequence is Bifunctional protein GlmU (476 aa).

Residues 1–235 are pyrophosphorylase; that stretch reads MTALDIIIMA…ALQVAGVNSP (235 aa). Residues Lys-23, Gln-81, 86–87, 108–110, Gly-145, Glu-160, and Asn-233 contribute to the UDP-N-acetyl-alpha-D-glucosamine site; these read GT and SGD. Asp-110 is a binding site for Mg(2+). Asn-233 is a Mg(2+) binding site. Positions 236–256 are linker; that stretch reads AQLADLERAHQRAQAAALMEQ. Positions 257 to 476 are N-acetyltransferase; that stretch reads GVRLADPARF…WKRPAKQAKG (220 aa). Positions 351 and 369 each coordinate UDP-N-acetyl-alpha-D-glucosamine. The active-site Proton acceptor is His-381. Tyr-384 and Asn-395 together coordinate UDP-N-acetyl-alpha-D-glucosamine. Acetyl-CoA-binding positions include Ala-398, 404–405, Ser-423, Gly-441, and Arg-458; that span reads NY.

In the N-terminal section; belongs to the N-acetylglucosamine-1-phosphate uridyltransferase family. It in the C-terminal section; belongs to the transferase hexapeptide repeat family. Homotrimer. The cofactor is Mg(2+).

Its subcellular location is the cytoplasm. The enzyme catalyses alpha-D-glucosamine 1-phosphate + acetyl-CoA = N-acetyl-alpha-D-glucosamine 1-phosphate + CoA + H(+). It carries out the reaction N-acetyl-alpha-D-glucosamine 1-phosphate + UTP + H(+) = UDP-N-acetyl-alpha-D-glucosamine + diphosphate. It participates in nucleotide-sugar biosynthesis; UDP-N-acetyl-alpha-D-glucosamine biosynthesis; N-acetyl-alpha-D-glucosamine 1-phosphate from alpha-D-glucosamine 6-phosphate (route II): step 2/2. It functions in the pathway nucleotide-sugar biosynthesis; UDP-N-acetyl-alpha-D-glucosamine biosynthesis; UDP-N-acetyl-alpha-D-glucosamine from N-acetyl-alpha-D-glucosamine 1-phosphate: step 1/1. Its pathway is bacterial outer membrane biogenesis; LPS lipid A biosynthesis. Its function is as follows. Catalyzes the last two sequential reactions in the de novo biosynthetic pathway for UDP-N-acetylglucosamine (UDP-GlcNAc). The C-terminal domain catalyzes the transfer of acetyl group from acetyl coenzyme A to glucosamine-1-phosphate (GlcN-1-P) to produce N-acetylglucosamine-1-phosphate (GlcNAc-1-P), which is converted into UDP-GlcNAc by the transfer of uridine 5-monophosphate (from uridine 5-triphosphate), a reaction catalyzed by the N-terminal domain. The protein is Bifunctional protein GlmU of Acidovorax sp. (strain JS42).